The chain runs to 820 residues: SART-1 family protein DOT2 (820 aa).

Composition is skewed to basic and acidic residues over residues 1-156 (MEVE…DNRG), 210-219 (EEKRNAEKQR), and 426-445 (LGSRKDGRRQAMKEEKERIE). 8 disordered regions span residues 1-177 (MEVE…SALD), 210-248 (EEKRNAEKQRAQQLSRIFEEQDNLNQGENEDGEDGEHLS), 420-445 (GLGAEDLGSRKDGRRQAMKEEKERIE), 523-544 (SSTNQTTDDNTTTGDETQENTV), 564-617 (KPES…PDEN), 657-678 (KLVGIVDDDGGKESKDKESKDR), 729-748 (KLKQMKNSDTPSQSVQRMRE), and 762-820 (GHVK…RPKP). Phosphoserine is present on Ser22. Coiled coils occupy residues 58-120 (RDKE…EKEK), 171-235 (KEAS…NLNQ), and 433-510 (RRQA…KEEA). Over residues 525–543 (TNQTTDDNTTTGDETQENT) the composition is skewed to low complexity. The span at 582–591 (VEVKEEHPDG) shows a compositional bias: basic and acidic residues. Residues 596–606 (NDTDMDAAEDS) show a composition bias toward acidic residues. 2 stretches are compositionally biased toward basic and acidic residues: residues 607 to 617 (SDTKEITPDEN) and 665 to 678 (DGGKESKDKESKDR). 2 stretches are compositionally biased toward polar residues: residues 733-744 (MKNSDTPSQSVQ) and 767-776 (GQTSDPQSGF). Over residues 792–807 (GDRKVEHFLGIKRKSE) the composition is skewed to basic and acidic residues.

This sequence belongs to the SNU66/SART1 family. In terms of tissue distribution, expressed in lateral root cap, columella, meristem and quiescent center (QC). Expressed in young leaves.

Its subcellular location is the nucleus. Plays a role in root, shoot and flower development. Probably required for normal root and shoot meristem organization and maintenance and the proper expression of PIN and PLT genes. Involved in leaf vasculature patterning. This is SART-1 family protein DOT2 from Arabidopsis thaliana (Mouse-ear cress).